The chain runs to 70 residues: Large ribosomal subunit protein bL31 (70 aa).

Residues cysteine 16, cysteine 18, cysteine 37, and cysteine 40 each coordinate Zn(2+).

Belongs to the bacterial ribosomal protein bL31 family. Type A subfamily. In terms of assembly, part of the 50S ribosomal subunit. The cofactor is Zn(2+).

Binds the 23S rRNA. This chain is Large ribosomal subunit protein bL31, found in Shewanella baltica (strain OS223).